The primary structure comprises 210 residues: Cytochrome c biogenesis ATP-binding export protein CcmA (210 aa).

The ABC transporter domain maps to 3–205 (LHLQAAGLAC…KPSGYRELNL (203 aa)). 37 to 44 (GPNGSGKT) provides a ligand contact to ATP.

Belongs to the ABC transporter superfamily. CcmA exporter (TC 3.A.1.107) family. As to quaternary structure, the complex is composed of two ATP-binding proteins (CcmA) and two transmembrane proteins (CcmB).

The protein localises to the cell inner membrane. It carries out the reaction heme b(in) + ATP + H2O = heme b(out) + ADP + phosphate + H(+). Part of the ABC transporter complex CcmAB involved in the biogenesis of c-type cytochromes; once thought to export heme, this seems not to be the case, but its exact role is uncertain. Responsible for energy coupling to the transport system. The polypeptide is Cytochrome c biogenesis ATP-binding export protein CcmA (Pseudomonas putida (strain GB-1)).